The sequence spans 770 residues: Amyloid-beta precursor protein (770 aa).

The N-terminal stretch at 1–17 is a signal peptide; that stretch reads MLPGLALLLLAAWTARA. Topologically, residues 18-701 are extracellular; it reads LEVPTDGNAG…AEDVGSNKGA (684 aa). Positions 28-123 are GFLD subdomain; it reads LLAEPQIAMF…PYRCLVGEFV (96 aa). Residues 28-189 form the E1 domain; sequence LLAEPQIAMF…RGVEFVCCPL (162 aa). Cystine bridges form between Cys-38/Cys-62, Cys-73/Cys-117, Cys-98/Cys-105, Cys-133/Cys-187, Cys-144/Cys-174, and Cys-158/Cys-186. 96–110 serves as a coordination point for heparin; sequence NWCKRGRKQCKTHPH. Residues 131 to 189 are cuBD subdomain; that stretch reads DKCKFLHQERMDVCETHLHWHTVAKETCSEKSTNLHDYGMLLPCGIDKFRGVEFVCCPL. The Cu(2+) site is built by His-147, His-151, and Tyr-168. The interval 181–188 is zinc-binding; the sequence is GVEFVCCP. Residues Glu-183, Cys-186, and Cys-187 each coordinate Zn(2+). The segment covering 194 to 207 has biased composition (acidic residues); it reads DNVDSADAEEDDSD. The disordered stretch occupies residues 194 to 284; the sequence is DNVDSADAEE…TTTTTTESVE (91 aa). At Ser-198 the chain carries Phosphoserine; by CK2. Ser-206 is modified (phosphoserine; by CK1). Sulfotyrosine occurs at positions 217 and 262. A compositionally biased stretch (acidic residues) spans 228–264; that stretch reads VAEEEEVAEVEEEEADDDEDDEDGDEVEEEAEEPYEE. Residues 268 to 281 show a composition bias toward low complexity; sequence RTTSIATTTTTTTE. Cystine bridges form between Cys-291–Cys-341, Cys-300–Cys-324, and Cys-316–Cys-337. The 51-residue stretch at 291-341 folds into the BPTI/Kunitz inhibitor domain; it reads CSEQAETGPCRAMISRWYFDVTEGKCAPFFYGGCGGNRNNFDTEEYCMAVC. A Sulfotyrosine modification is found at Tyr-336. The OX-2 signature appears at 344–365; sequence VMSQSLLKTTQEPLARDPVKLP. Residues 374–565 form the E2 domain; the sequence is AVDKYLETPG…EEIQDEVDEL (192 aa). The heparin-binding stretch occupies residues 391–423; sequence FQKAKERLEAKHRERMSQVMREWEEAERQAKNL. Ser-441 is subject to Phosphoserine. The segment at 491 to 522 is heparin-binding; it reads FNMLKKYVRAEQKDRQHTLKHFEHVRMVDPKK. Tyr-497 carries the phosphotyrosine modification. A collagen-binding region spans residues 523-540; it reads AAQIRSQVMTHLRVIYER. Residues Asn-542 and Asn-571 are each glycosylated (N-linked (GlcNAc...) asparagine). The Cu(2+) site is built by His-677, Tyr-681, His-684, and His-685. Residues His-677, Tyr-681, His-684, and His-685 each contribute to the Zn(2+) site. Residues 695–722 are interaction with PSEN1; it reads VGSNKGAIIGLMVGGVVIATVIVITLVM. The helical transmembrane segment at 702-722 threads the bilayer; that stretch reads IIGLMVGGVVIATVIVITLVM. At 723-770 the chain is on the cytoplasmic side; that stretch reads LKKKQYTSIHHGVVEVDAAVTPEERHLSKMQQNGYENPTYKFFEQMQN. The Basolateral sorting signal motif lies at 724–734; the sequence is KKKQYTSIHHG. Thr-729 carries the phosphothreonine modification. The residue at position 730 (Ser-730) is a Phosphoserine; by APP-kinase I. The interaction with G(o)-alpha stretch occupies residues 732–751; it reads HHGVVEVDAAVTPEERHLSK. Phosphothreonine; by CDK5 and MAPK10 is present on Thr-743. The segment at 756–770 is required for the interaction with KIF5B and for anterograde transport in axons; sequence GYENPTYKFFEQMQN. Tyr-757 carries the phosphotyrosine; by ABL1 modification. The YENPXY motif; contains endocytosis signal signature appears at 757 to 762; sequence YENPTY. Lys-763 participates in a covalent cross-link: Glycyl lysine isopeptide (Lys-Gly) (interchain with G-Cter in ubiquitin).

The protein belongs to the APP family. Binds, via its C-terminus, to the PID domain of several cytoplasmic proteins, including APBB family members, the APBA family, MAPK8IP1, SHC1 and NUMB and DAB1. Binding to DAB1 inhibits its serine phosphorylation. Interacts (via NPXY motif) with DAB2 (via PID domain); the interaction is impaired by tyrosine phosphorylation of the NPXY motif. Also interacts with GPCR-like protein BPP, APPBP1, IB1, KNS2 (via its TPR domains), APPBP2 (via BaSS) and DDB1. In vitro, it binds MAPT via the MT-binding domains. Associates with microtubules in the presence of ATP and in a kinesin-dependent manner. Interacts, through a C-terminal domain, with GNAO1. Amyloid-beta protein 42 binds CHRNA7 in hippocampal neurons. Amyloid-beta associates with HADH2. Interacts with CPEB1, ANKS1B and AGER. Interacts with ITM2B. Interacts with ITM2C. Interacts with IDE. Can form homodimers; dimerization is enhanced in the presence of Cu(2+) ions. Can form homodimers; this is promoted by heparin binding. Amyloid-beta protein 40 interacts with S100A9. CTF-alpha product of APP interacts with GSAP. Interacts with SORL1 (via N-terminal ectodomain); this interaction retains APP in the trans-Golgi network and reduces processing into soluble APP-alpha and amyloid-beta peptides. The C99 fragment also interacts with SORL1. Interacts with PLD3. Interacts with VDAC1. Interacts with NSG1; could regulate APP processing. Amyloid-beta protein 42 interacts with FPR2. Interacts (via transmembrane region) with PSEN1; the interaction is direct. Interacts with LRRK2. Interacts (via cytoplasmic domain) with KIF5B. Interacts (via C-terminus) with APBB2/FE65L1 (via C-terminus). Interacts (via intracellular domain) with APBB3. Post-translationally, proteolytically processed under normal cellular conditions. Cleavage either by alpha-secretase, beta-secretase or theta-secretase leads to generation and extracellular release of soluble APP peptides, S-APP-alpha and S-APP-beta, and the retention of corresponding membrane-anchored C-terminal fragments, C80, C83 and C99. Subsequent processing of C80 and C83 by gamma-secretase yields P3 peptides. This is the major secretory pathway and is non-amyloidogenic. Alternatively, presenilin/nicastrin-mediated gamma-secretase processing of C99 releases the amyloid-beta proteins, amyloid-beta protein 40 and amyloid-beta protein 42, major components of amyloid plaques, and the cytotoxic C-terminal fragments, gamma-CTF(50), gamma-CTF(57) and gamma-CTF(59). PSEN1 cleavage is more efficient with C83 than with C99 as substrate (in vitro). Amyloid-beta protein 40 and Amyloid-beta protein 42 are cleaved by ACE. Many other minor amyloid-beta peptides, amyloid-beta 1-X peptides, are found in cerebral spinal fluid (CSF) including the amyloid-beta X-15 peptides, produced from the cleavage by alpha-secretase. Proteolytically cleaved by caspases during neuronal apoptosis. Cleavage at Asp-739 by either caspase-3, -8 or -9 results in the production of the neurotoxic C31 peptide and the increased production of amyloid-beta peptides. In terms of processing, N- and O-glycosylated. Post-translationally, phosphorylation in the C-terminal on tyrosine, threonine and serine residues is neuron-specific. Phosphorylation can affect APP processing, neuronal differentiation and interaction with other proteins. Phosphorylated on Thr-743 in neuronal cells by Cdc5 kinase and Mapk10, in dividing cells by Cdc2 kinase in a cell-cycle dependent manner with maximal levels at the G2/M phase and, in vitro, by GSK-3-beta. The Thr-743 phosphorylated form causes a conformational change which reduces binding of Fe65 family members. In dopaminergic (DA) neurons, phosphorylation on Thr-743 by LRKK2 promotes the production and the nuclear translocation of the APP intracellular domain (AICD) which induces DA neuron apoptosis. Phosphorylation on Tyr-757 is required for SHC binding. Phosphorylated in the extracellular domain by casein kinases on both soluble and membrane-bound APP. This phosphorylation is inhibited by heparin. Trophic-factor deprivation triggers the cleavage of surface APP by beta-secretase to release sAPP-beta which is further cleaved to release an N-terminal fragment of APP (N-APP). In terms of processing, amyloid-beta peptides are degraded by IDE. Post-translationally, sulfated on tyrosine residues.

The protein localises to the cell membrane. The protein resides in the membrane. Its subcellular location is the perikaryon. It is found in the cell projection. It localises to the growth cone. The protein localises to the clathrin-coated pit. The protein resides in the early endosome. Its subcellular location is the cytoplasmic vesicle. It is found in the endoplasmic reticulum. It localises to the golgi apparatus. The protein localises to the secreted. The protein resides in the cell surface. Its subcellular location is the nucleus. It is found in the cytoplasm. Functions as a cell surface receptor and performs physiological functions on the surface of neurons relevant to neurite growth, neuronal adhesion and axonogenesis. Interaction between APP molecules on neighboring cells promotes synaptogenesis. Involved in cell mobility and transcription regulation through protein-protein interactions. Can promote transcription activation through binding to APBB1-KAT5 and inhibit Notch signaling through interaction with Numb. Couples to apoptosis-inducing pathways such as those mediated by G(o) and JIP. Inhibits G(o)-alpha ATPase activity. Acts as a kinesin I membrane receptor, mediating the axonal transport of beta-secretase and presenilin 1. By acting as a kinesin I membrane receptor, plays a role in axonal anterograde transport of cargo towards synapses in axons. May be involved in copper homeostasis/oxidative stress through copper ion reduction. In vitro, copper-metallated APP induces neuronal death directly or is potentiated through Cu(2+)-mediated low-density lipoprotein oxidation. Can regulate neurite outgrowth through binding to components of the extracellular matrix such as heparin and collagen I and IV. Induces a AGER-dependent pathway that involves activation of p38 MAPK, resulting in internalization of amyloid-beta peptide and mitochondrial dysfunction in cultured cortical neurons. Provides Cu(2+) ions for GPC1 which are required for release of nitric oxide (NO) and subsequent degradation of the heparan sulfate chains on GPC1. Functionally, amyloid-beta peptides are lipophilic metal chelators with metal-reducing activity. Binds transient metals such as copper, zinc and iron. Its function is as follows. The gamma-CTF peptides as well as the caspase-cleaved peptides, including C31, are potent enhancers of neuronal apoptosis. The sequence is that of Amyloid-beta precursor protein from Pan troglodytes (Chimpanzee).